The primary structure comprises 362 residues: Manganese peroxidase 3 (362 aa).

A signal peptide spans 1 to 18; it reads MAFKQLLTAISIVSVANA. A propeptide spanning residues 19–23 is cleaved from the precursor; it reads ALTRR. 4 cysteine pairs are disulfide-bonded: cysteine 26–cysteine 39, cysteine 38–cysteine 309, cysteine 58–cysteine 144, and cysteine 273–cysteine 338. 2 residues coordinate Mn(2+): glutamate 60 and glutamate 64. The Proton acceptor role is filled by histidine 71. 4 residues coordinate Ca(2+): aspartate 72, glycine 90, aspartate 92, and serine 94. Asparagine 126 is a glycosylation site (N-linked (GlcNAc...) asparagine). Histidine 200 serves as a coordination point for heme b. Threonine 201 is a Ca(2+) binding site. Residue aspartate 206 coordinates Mn(2+). Positions 218, 220, 223, and 225 each coordinate Ca(2+). Residues 341-362 form a disordered region; sequence TPFPSLSADPGPATSVAPVPPS.

Belongs to the peroxidase family. Ligninase subfamily. Heme b serves as cofactor. The cofactor is Ca(2+).

Its subcellular location is the secreted. The enzyme catalyses 2 Mn(2+) + H2O2 + 2 H(+) = 2 Mn(3+) + 2 H2O. Catalyzes the oxidation of Mn(2+) to Mn(3+). The latter, acting as a diffusible redox mediator, is capable of oxidizing a variety of lignin compounds. This isozyme is also able to oxidize phenols and amines in the absence of Mn(2+), similar to versatile peroxidases. In Phlebia radiata (White-rot fungus), this protein is Manganese peroxidase 3 (mnp3).